A 1002-amino-acid polypeptide reads, in one-letter code: BTB/POZ domain-containing protein At1g04390 (1002 aa).

BTB domains are found at residues 680–758 and 808–889; these read SDMR…EVES and SDVI…PKPP.

It participates in protein modification; protein ubiquitination. Functionally, may act as a substrate-specific adapter of an E3 ubiquitin-protein ligase complex (CUL3-RBX1-BTB) which mediates the ubiquitination and subsequent proteasomal degradation of target proteins. This Arabidopsis thaliana (Mouse-ear cress) protein is BTB/POZ domain-containing protein At1g04390.